Consider the following 338-residue polypeptide: dTDP-glucose 4,6-dehydratase (338 aa).

NAD(+) contacts are provided by residues 12 to 13 (FI), 33 to 36 (DKLT), 59 to 60 (DI), 81 to 85 (LAAES), and T100. Residue S85 coordinates substrate. T134 serves as a coordination point for substrate. D135 serves as the catalytic Proton donor. Residues E136 and Y160 each act as proton acceptor in the active site. 160–164 (YSASK) lines the NAD(+) pocket. N189 serves as a coordination point for substrate. N190 contributes to the NAD(+) binding site. Residues 199-200 (KL), 215-217 (PIY), R224, N259, and 293-297 (DRPGH) each bind substrate.

It belongs to the NAD(P)-dependent epimerase/dehydratase family. dTDP-glucose dehydratase subfamily. In terms of assembly, homodimer. Requires NAD(+) as cofactor.

It catalyses the reaction dTDP-alpha-D-glucose = dTDP-4-dehydro-6-deoxy-alpha-D-glucose + H2O. It participates in carbohydrate biosynthesis; dTDP-L-rhamnose biosynthesis. Its pathway is bacterial outer membrane biogenesis; LPS O-antigen biosynthesis. Functionally, catalyzes the dehydration of dTDP-D-glucose to form dTDP-6-deoxy-D-xylo-4-hexulose via a three-step process involving oxidation, dehydration and reduction. This chain is dTDP-glucose 4,6-dehydratase (rffG), found in Haemophilus influenzae (strain ATCC 51907 / DSM 11121 / KW20 / Rd).